The chain runs to 422 residues: UDP-N-acetylglucosamine 1-carboxyvinyltransferase (422 aa).

22-23 (KN) provides a ligand contact to phosphoenolpyruvate. Arginine 93 provides a ligand contact to UDP-N-acetyl-alpha-D-glucosamine. The active-site Proton donor is the cysteine 117. Position 117 is a 2-(S-cysteinyl)pyruvic acid O-phosphothioketal (cysteine 117). Residues 122–126 (RPVDL), aspartate 308, and leucine 330 contribute to the UDP-N-acetyl-alpha-D-glucosamine site.

Belongs to the EPSP synthase family. MurA subfamily.

It is found in the cytoplasm. The enzyme catalyses phosphoenolpyruvate + UDP-N-acetyl-alpha-D-glucosamine = UDP-N-acetyl-3-O-(1-carboxyvinyl)-alpha-D-glucosamine + phosphate. It participates in cell wall biogenesis; peptidoglycan biosynthesis. In terms of biological role, cell wall formation. Adds enolpyruvyl to UDP-N-acetylglucosamine. This is UDP-N-acetylglucosamine 1-carboxyvinyltransferase from Helicobacter pylori (strain Shi470).